The primary structure comprises 154 residues: uncharacterized protein (154 aa).

3 helical membrane-spanning segments follow: residues 26-48, 97-119, and 132-150; these read VSGW…GVVT, IAMF…LIVF, and GLYT…YCAW.

It is found in the cell membrane. This is an uncharacterized protein from Archaeoglobus fulgidus (strain ATCC 49558 / DSM 4304 / JCM 9628 / NBRC 100126 / VC-16).